A 245-amino-acid polypeptide reads, in one-letter code: DNA polymerase sliding clamp 1 (245 aa).

The protein belongs to the PCNA family. The subunits circularize to form a toroid; DNA passes through its center. Replication factor C (RFC) is required to load the toroid on the DNA. Forms a dimeric complex with PCNA3 and a trimeric complex with PCNA2 and PCNA3; does not form homotrimers.

Sliding clamp subunit that acts as a moving platform for DNA processing. Responsible for tethering the catalytic subunit of DNA polymerase and other proteins to DNA during high-speed replication. The trimeric complex inhibits DNA ligase and both 3'-5' and 5'-3' activity of Hel308 (Hjm) helicase, but stimulates Hjc, the Holliday junction cleavage enzyme. This Sulfurisphaera tokodaii (strain DSM 16993 / JCM 10545 / NBRC 100140 / 7) (Sulfolobus tokodaii) protein is DNA polymerase sliding clamp 1.